A 374-amino-acid chain; its full sequence is Patatin-2-Kuras 1 (374 aa).

The signal sequence occupies residues Met-1 to Ala-11. Residues Leu-20–Leu-217 enclose the PNPLA domain. The GXGXXG motif lies at Gly-24 to Gly-29. The short motif at Gly-63–Gly-67 is the GXSXG element. Ser-65 (nucleophile) is an active-site residue. The N-linked (GlcNAc...) asparagine glycan is linked to Asn-103. The active-site Proton acceptor is the Asp-203. The short motif at Asp-203–Ala-205 is the DGA/G element. The stretch at Glu-309–Ala-372 forms a coiled coil.

It belongs to the patatin family. Tuber.

The protein resides in the vacuole. Functionally, probable lipolytic acyl hydrolase (LAH), an activity which is thought to be involved in the response of tubers to pathogens. This is Patatin-2-Kuras 1 (pat2-k1) from Solanum tuberosum (Potato).